Reading from the N-terminus, the 214-residue chain is External core antigen (214 aa).

An N-terminal signal peptide occupies residues 1 to 19; sequence MQLFHLCLIISCTCPTVQA. Residues 25-27 are HBEAG; the sequence is GWL. The segment at 165 to 214 is disordered; that stretch reads NAPILSTLPETTVVRRRDRGRSPRRRTPSPRRRRSQSPRRRRSQSRESQC. Residues 178 to 207 are compositionally biased toward basic residues; that stretch reads VRRRDRGRSPRRRTPSPRRRRSQSPRRRRS. The stretch at 186–192 is one 1; half-length repeat; sequence SPRRRTP. Positions 186 to 208 are 3 X 8 AA repeats of S-P-R-R-R-R-S-Q; that stretch reads SPRRRTPSPRRRRSQSPRRRRSQ. The propeptide occupies 186–214; it reads SPRRRTPSPRRRRSQSPRRRRSQSRESQC. Tandem repeats lie at residues 193–200 and 201–208.

This sequence belongs to the orthohepadnavirus precore antigen family. In terms of assembly, homodimerizes. In terms of processing, phosphorylated. Post-translationally, cleaved by host furin.

The protein localises to the secreted. Its subcellular location is the host nucleus. In terms of biological role, may regulate immune response to the intracellular capsid in acting as a T-cell tolerogen, by having an immunoregulatory effect which prevents destruction of infected cells by cytotoxic T-cells. This immune regulation may predispose to chronicity during perinatal infections and prevent severe liver injury during adult infections. The polypeptide is External core antigen (Hepatitis B virus genotype A2 (isolate Japan/11D11HCCW/1998) (HBV-A)).